Here is a 101-residue protein sequence, read N- to C-terminus: Urease subunit beta (101 aa).

This sequence belongs to the urease beta subunit family. In terms of assembly, heterotrimer of UreA (gamma), UreB (beta) and UreC (alpha) subunits. Three heterotrimers associate to form the active enzyme.

The protein localises to the cytoplasm. The enzyme catalyses urea + 2 H2O + H(+) = hydrogencarbonate + 2 NH4(+). The protein operates within nitrogen metabolism; urea degradation; CO(2) and NH(3) from urea (urease route): step 1/1. The sequence is that of Urease subunit beta from Saccharophagus degradans (strain 2-40 / ATCC 43961 / DSM 17024).